We begin with the raw amino-acid sequence, 597 residues long: Bile salt-activated lipase (597 aa).

The signal sequence occupies residues 1 to 18 (LGASRLGPSPGCLAVASA). Cys-82 and Cys-98 form a disulfide bridge. N-linked (GlcNAc...) asparagine glycosylation is present at Asn-205. Ser-212 acts as the Acyl-ester intermediate in catalysis. A disulfide bond links Cys-264 and Cys-275. The Charge relay system role is filled by Asp-338. A glycan (N-linked (GlcNAc...) asparagine) is linked at Asn-379. Catalysis depends on His-453, which acts as the Charge relay system. Residues 553–591 (AGASLLPPEDNSQASPVPPADNSGAPTEPSAGDSEVAQM) form a disordered region.

It belongs to the type-B carboxylesterase/lipase family. Interacts with CLC.

The protein resides in the secreted. The catalysed reaction is a triacylglycerol + H2O = a diacylglycerol + a fatty acid + H(+). The enzyme catalyses 1,2,3-tri-(9Z-octadecenoyl)-glycerol + H2O = di-(9Z)-octadecenoylglycerol + (9Z)-octadecenoate + H(+). It carries out the reaction 1,2,3-trioctanoylglycerol + H2O = dioctanoylglycerol + octanoate + H(+). It catalyses the reaction a sterol ester + H2O = a sterol + a fatty acid + H(+). The catalysed reaction is cholesteryl (9Z-octadecenoate) + H2O = cholesterol + (9Z)-octadecenoate + H(+). The enzyme catalyses an acetyl ester + H2O = an aliphatic alcohol + acetate + H(+). It carries out the reaction a butanoate ester + H2O = an aliphatic alcohol + butanoate + H(+). It catalyses the reaction 9-hexadecanoyloxy-octadecanoate + H2O = 9-hydroxy-octadecanoate + hexadecanoate + H(+). The catalysed reaction is 9-(9Z-octadecenoyloxy)-octadecanoate + H2O = 9-hydroxy-octadecanoate + (9Z)-octadecenoate + H(+). The enzyme catalyses 1-hexadecanoyl-sn-glycero-3-phosphocholine + H2O = sn-glycerol 3-phosphocholine + hexadecanoate + H(+). It carries out the reaction 12-hexadecanoyloxy-octadecanoate + H2O = 12-hydroxyoctadecanoate + hexadecanoate + H(+). It catalyses the reaction 12-(9Z-octadecenoyloxy)-octadecanoate + H2O = 12-hydroxyoctadecanoate + (9Z)-octadecenoate + H(+). The catalysed reaction is 13-(9Z-octadecenoyloxy)-octadecanoate + H2O = 13-hydroxy-octadecanoate + (9Z)-octadecenoate + H(+). The enzyme catalyses 9-(9Z-hexadecenoyloxy)-octadecanoate + H2O = (9Z)-hexadecenoate + 9-hydroxy-octadecanoate + H(+). It carries out the reaction 12-(9Z-hexadecenoyloxy)-octadecanoate + H2O = 12-hydroxyoctadecanoate + (9Z)-hexadecenoate + H(+). It catalyses the reaction 13-(9Z-hexadecenoyloxy)-octadecanoate + H2O = 13-hydroxy-octadecanoate + (9Z)-hexadecenoate + H(+). The catalysed reaction is 12-octadecanoyloxy-octadecanoate + H2O = 12-hydroxyoctadecanoate + octadecanoate + H(+). The enzyme catalyses 13-octadecanoyloxy-octadecanoate + H2O = 13-hydroxy-octadecanoate + octadecanoate + H(+). It carries out the reaction 5-(9Z-hexadecenoyloxy)-octadecanoate + H2O = 5-hydroxy-octadecanoate + (9Z)-hexadecenoate + H(+). It catalyses the reaction 9-octadecanoyloxy-octadecanoate + H2O = 9-hydroxy-octadecanoate + octadecanoate + H(+). Its activity is regulated as follows. Activated by bile salts such as sodium taurocholate. Catalyzes the hydrolysis of a wide range of substrates including cholesteryl esters, phospholipids, lysophospholipids, di- and tri-acylglycerols, and fatty acid esters of hydroxy fatty acids (FAHFA). Preferentially hydrolyzes FAHFAs with the ester bond further away from the carboxylate. Unsaturated FAHFAs are hydrolyzed more quickly than saturated FAHFAs. Has an essential role in the complete digestion of dietary lipids and their intestinal absorption, along with the absorption of fat-soluble vitamins. The polypeptide is Bile salt-activated lipase (CEL) (Bos taurus (Bovine)).